A 131-amino-acid polypeptide reads, in one-letter code: Ribosomally synthesized cyclic peptide phomopsin precursor gigA (131 aa).

The N-terminal stretch at 1–18 is a signal peptide; the sequence is MQFTLIFFYATLAAFGLA. Propeptides lie at residues 19–38, 48–65, 75–92, 102–119, and 129–131; these read APSE…LDKR, ADLV…LDKR, ADMV…LDKR, ADMV…LAKR, and ADM.

GigA is processed by several endopeptidases including kexin proteases to produce 2 identical copies of the nonaxapeptide Ile-Asn-Phe-Lys-Ile-Pro-Tyr-Thr-Gly, one copy of the nonaketide Ile-Gly-Phe-Lys-Leu-Pro-Tyr-Arg-Gly and one copy of the nonaketide Pro-Asn-Phe-Lys-Met-Pro-Tyr-Arg-Gly, that are further modified into phomapsins B, C and A, respectively. After being excised from the precursor peptide, the core peptides are cyclized and modified post-translationally by enzymes encoded within the gene cluster. Epichloecyclin biosynthesis requires only dimethylation of the side-chain amino group of the conserved lysine for completion.

It participates in mycotoxin biosynthesis. Its function is as follows. Ribosomally synthesized cyclic peptide phomopsin precursor; part of the gene cluster that mediates the biosynthesis of the epichloecyclins, a group of nonapeptides, with a likely cyclic structure and dimethylation of the conserved lysine. The gigA translated product contains 4 repeated peptide embedding the nonapeptide Ile-Asn-Phe-Lys-Ile-Pro-Tyr-Thr-Gly in repeats 1 and 2, Ile-Gly-Phe-Lys-Leu-Pro-Tyr-Arg-Gly in repeat 3, and Pro-Asn-Phe-Lys-Met-Pro-Tyr-Arg-Gly in repeat 4 that are converted into epichloecyclins B, C and A, respectively. Moreover, removal of the last Gly residue in epichloecyclins B and C leads to epichloecyclins D and E, respectively. The protein is Ribosomally synthesized cyclic peptide phomopsin precursor gigA (nc25) of Epichloe festucae (strain Fl1).